The primary structure comprises 258 residues: UBX domain-containing protein 2A (258 aa).

The interval 1 to 152 (MKEVDNLDSI…SATPRIVSKA (152 aa)) is required for interaction with CHRNA3. The required for inhibition of CHRNA3 ubiquitination and translocation of CHRNA3 to the plasma membrane resulting in an increase in acetylcholine-gated nicotinic acetylcholine receptor currents stretch occupies residues 1–165 (MKEVDNLDSI…EVDNKSTLSA (165 aa)). The region spanning 61 to 125 (QVDVNIKLWK…VEDKKNEVCM (65 aa)) is the SEP domain. The segment at 168 to 258 (LNNLEPITRI…QKTAEPFRKL (91 aa)) is required for interaction with VCP. In terms of domain architecture, UBX spans 170–247 (NLEPITRIQI…DLQNAVIIQR (78 aa)).

In terms of assembly, part of a complex composed of STUB1/CHIP, VCP/p97, CHRNA3, and UBXN2A that modulates the ubiquitination and endoplasmic reticulum-associated degradation (ERAD) of CHRNA3. Within the complex UBXN2A acts as a scaffold protein required for the interaction of CHRNA3 with VCP/p97, this interaction also inhibits CHRNA3 ubiquitination by STUB1/CHIP and subsequently ERAD. Interacts (via SEP domain) with CHRNA3 and interacts (via UBX domain) with VCP/P97; these interactions are required for the interaction of CHRNA3 with the STUB1-VCP-UBXN2A complex. Interacts with HSPA9/MOT-2 (via SBD domain); the interaction inhibits HSPA9/MOT-2 interaction with and degradation of p53, thereby promotes p53 translocation to the nucleus. Interacts with RICTOR. Ubiquitinated.

It is found in the golgi apparatus. The protein resides in the endoplasmic reticulum. Its subcellular location is the perikaryon. It localises to the cell projection. The protein localises to the dendrite. It is found in the nucleus. The protein resides in the cytoplasm. Acts to repress the ubiquitination and subsequent endoplasmic reticulum-associated degradation of CHRNA3 by the STUB1-VCP-UBXN2A complex in cortical neurons. Also acts to promote the translocation of CHRNA3 to the plasma membrane and subsequently increases plasma membrane acetylcholine-gated ion-channel activation. Plays a role in the inhibition of STUB1-mediated TP53 degradation, via its interaction with HSPA9 which acts to inhibit TP53 binding to HSPA9. Positively mediates the ubiquitination and proteosomal degradation of RICTOR, may thereby act as a negative regulator of the mTORC2 pathway. This chain is UBX domain-containing protein 2A, found in Rattus norvegicus (Rat).